Here is a 281-residue protein sequence, read N- to C-terminus: Phosphate import ATP-binding protein PstB 1 (281 aa).

The tract at residues 1-34 is disordered; the sequence is MTENTAETADESSDGGVTATTGAATTTPTTPPEP. Positions 15–28 are enriched in low complexity; it reads GGVTATTGAATTTP. The ABC transporter domain occupies 36–276; it reads IRARDLDVFY…PEHQRVEEYI (241 aa). 68 to 75 is an ATP binding site; it reads GPSGCGKS.

This sequence belongs to the ABC transporter superfamily. Phosphate importer (TC 3.A.1.7) family. The complex is composed of two ATP-binding proteins (PstB), two transmembrane proteins (PstC and PstA) and a solute-binding protein (PstS).

The protein resides in the cell membrane. The catalysed reaction is phosphate(out) + ATP + H2O = ADP + 2 phosphate(in) + H(+). Functionally, part of the ABC transporter complex PstSACB involved in phosphate import. Responsible for energy coupling to the transport system. This chain is Phosphate import ATP-binding protein PstB 1, found in Halobacterium salinarum (strain ATCC 700922 / JCM 11081 / NRC-1) (Halobacterium halobium).